The following is a 125-amino-acid chain: Aspartate 1-decarboxylase (125 aa).

Residue Ser-25 is the Schiff-base intermediate with substrate; via pyruvic acid of the active site. A Pyruvic acid (Ser) modification is found at Ser-25. Thr-57 contacts substrate. Catalysis depends on Tyr-58, which acts as the Proton donor. 71–73 (GAA) contacts substrate.

The protein belongs to the PanD family. In terms of assembly, heterooctamer of four alpha and four beta subunits. Pyruvate is required as a cofactor. In terms of processing, is synthesized initially as an inactive proenzyme, which is activated by self-cleavage at a specific serine bond to produce a beta-subunit with a hydroxyl group at its C-terminus and an alpha-subunit with a pyruvoyl group at its N-terminus.

It localises to the cytoplasm. The enzyme catalyses L-aspartate + H(+) = beta-alanine + CO2. The protein operates within cofactor biosynthesis; (R)-pantothenate biosynthesis; beta-alanine from L-aspartate: step 1/1. Its function is as follows. Catalyzes the pyruvoyl-dependent decarboxylation of aspartate to produce beta-alanine. In Hydrogenobaculum sp. (strain Y04AAS1), this protein is Aspartate 1-decarboxylase.